We begin with the raw amino-acid sequence, 239 residues long: 2-C-methyl-D-erythritol 4-phosphate cytidylyltransferase (239 aa).

This sequence belongs to the IspD/TarI cytidylyltransferase family. IspD subfamily.

The enzyme catalyses 2-C-methyl-D-erythritol 4-phosphate + CTP + H(+) = 4-CDP-2-C-methyl-D-erythritol + diphosphate. It functions in the pathway isoprenoid biosynthesis; isopentenyl diphosphate biosynthesis via DXP pathway; isopentenyl diphosphate from 1-deoxy-D-xylulose 5-phosphate: step 2/6. In terms of biological role, catalyzes the formation of 4-diphosphocytidyl-2-C-methyl-D-erythritol from CTP and 2-C-methyl-D-erythritol 4-phosphate (MEP). The chain is 2-C-methyl-D-erythritol 4-phosphate cytidylyltransferase from Acidobacterium capsulatum (strain ATCC 51196 / DSM 11244 / BCRC 80197 / JCM 7670 / NBRC 15755 / NCIMB 13165 / 161).